The following is a 548-amino-acid chain: ComP-specific O-oligosaccharyltransferase (548 aa).

A run of 12 helical transmembrane segments spans residues 8 to 28, 32 to 52, 68 to 88, 91 to 111, 119 to 139, 164 to 184, 189 to 209, 213 to 233, 239 to 259, 331 to 351, 363 to 383, and 418 to 438; these read IKNYTIVSGVFFLGSAFIIPN, LSSTLYKELIAVLGLLILLTV, WFLFVIFIIFIQLIVGEIYFF, FFFSISFLVILFLSFLLGFNE, IVKKIAWIFIIVVQISFLIAI, LGQPNQFSTLILITLFLLCYL, SLNNMVFNILSFCLIFANVMT, SAWISVILISLLYLLKFQKKI, IFFNIVFWTLVYCVPLLFNLI, MLWNGFFIGLIISILILCFLI, LFLFFCVVAFFVHCLLEYPFA, and TLFLGCCWLGYVAFWVEVLDI.

The protein belongs to the PglL O-oligosaccharyltransferase family.

It is found in the cell membrane. Its function is as follows. Specifically catalyzes the glycosylation of the pilin-like competence factor ComP. In Acinetobacter baylyi (strain ATCC 33305 / BD413 / ADP1), this protein is ComP-specific O-oligosaccharyltransferase.